The primary structure comprises 563 residues: Arginine--tRNA ligase (563 aa).

The 'HIGH' region signature appears at 122 to 132 (PNIAKPISMGH).

The protein belongs to the class-I aminoacyl-tRNA synthetase family. Monomer.

Its subcellular location is the cytoplasm. It carries out the reaction tRNA(Arg) + L-arginine + ATP = L-arginyl-tRNA(Arg) + AMP + diphosphate. The chain is Arginine--tRNA ligase from Enterococcus faecalis (strain ATCC 700802 / V583).